The primary structure comprises 565 residues: MKPTNNSTLEVISPKVQVDDEFITTDYDYQTSHVKRTADGQLQVHPQTTSLKIRTGRHVPKLGVMLVGWGGNNGSTLTAALEANRRQLKWRKRTGVQEANWYGSITQASTVFIGSDEDGGDVYVPMKELLPMVEPDNIIVDGWDISGLHLGDAMRRAEVLDVALQDQIYDQLAQLRPRPSIYDPDFIAANQSDRADNVIRGTRLEQYEQIRKDIRDFRERSGVDSVIVLWTANTERFADVQPGLNTTSQELIASLEANHSEVSPSTIFAMASIAEGCTYINGSPQNTFVPGLIQLAEEKNVFIAGDDFKSGQTKIKSVLVDFLVGAGIKPVSIASYNHLGNNDGKNLSAPQQFRSKEISKSNVVDDMVASNRLLYGPDEHPDHVVVIKYVPYVGDSKRAMDEYTSEIMMGGHNTLVIHNTCEDSLLATPLILDLVILGELSTRIQLRNAEKESAPWVPFKPVLSLLSYLCKAPLVPQGSQVVNSLFRQRAAIENILRGCIGLPPISHMTLEQRFDFSTITNEPPLKRVKILGQPCSVESVTNGKKLHANGHSNGSAKLATNGNGH.

G70, G71, N72, N73, D144, S180, I181, Q191, R194, T231, A232, N233, T234, G282, S283, D307, S310, N341, N342, D343, K356, G394, D395, D423, and S424 together coordinate NAD(+). The residue at position 536 (S536) is a Phosphoserine. A disordered region spans residues 546 to 565; it reads LHANGHSNGSAKLATNGNGH. Residues 550–565 are compositionally biased toward polar residues; the sequence is GHSNGSAKLATNGNGH.

Belongs to the myo-inositol 1-phosphate synthase family. It depends on NAD(+) as a cofactor. In terms of tissue distribution, higher expression in adult heads than bodies.

It localises to the cytoplasm. It carries out the reaction D-glucose 6-phosphate = 1D-myo-inositol 3-phosphate. Its pathway is polyol metabolism; myo-inositol biosynthesis; myo-inositol from D-glucose 6-phosphate: step 1/2. In terms of biological role, key enzyme in myo-inositol biosynthesis pathway that catalyzes the conversion of glucose 6-phosphate to 1-myo-inositol 1-phosphate in a NAD-dependent manner. Rate-limiting enzyme in the synthesis of all inositol-containing compounds. The protein is Inositol-3-phosphate synthase (Inos) of Drosophila melanogaster (Fruit fly).